Consider the following 245-residue polypeptide: Enolase-phosphatase E1 (245 aa).

Belongs to the HAD-like hydrolase superfamily. MasA/MtnC family. In terms of assembly, monomer. Mg(2+) is required as a cofactor.

The enzyme catalyses 5-methylsulfanyl-2,3-dioxopentyl phosphate + H2O = 1,2-dihydroxy-5-(methylsulfanyl)pent-1-en-3-one + phosphate. The protein operates within amino-acid biosynthesis; L-methionine biosynthesis via salvage pathway; L-methionine from S-methyl-5-thio-alpha-D-ribose 1-phosphate: step 3/6. Its pathway is amino-acid biosynthesis; L-methionine biosynthesis via salvage pathway; L-methionine from S-methyl-5-thio-alpha-D-ribose 1-phosphate: step 4/6. Bifunctional enzyme that catalyzes the enolization of 2,3-diketo-5-methylthiopentyl-1-phosphate (DK-MTP-1-P) into the intermediate 2-hydroxy-3-keto-5-methylthiopentenyl-1-phosphate (HK-MTPenyl-1-P), which is then dephosphorylated to form the acireductone 1,2-dihydroxy-3-keto-5-methylthiopentene (DHK-MTPene). The polypeptide is Enolase-phosphatase E1 (Parasynechococcus marenigrum (strain WH8102)).